The chain runs to 434 residues: Indole diterpene prenyltransferase nodD2 (434 aa).

L-tryptophan is bound by residues leucine 85 to isoleucine 86 and glutamate 94. Arginine 107, lysine 194, arginine 268, lysine 270, tyrosine 272, glutamine 351, tyrosine 353, tyrosine 418, and tyrosine 422 together coordinate substrate.

Belongs to the tryptophan dimethylallyltransferase family.

The protein operates within secondary metabolite biosynthesis. Its function is as follows. Indole diterpene prenyltransferase; part of the gene cluster that mediates the biosynthesis of the indole diterpenes nodulisporic acids (NA). Nodulisporic acid A (NAA) and its chemically modified derivatives are of particular significance because of their highly potent insecticidal activity against blood-feeding arthropods and lack of observable adverse effects on mammals, in particular the tremogenicity associated with the paspaline-derived IDTs is not observed. The geranylgeranyl diphosphate (GGPP) synthase ggs1, localized outside of the cluster, is proposed to catalyze the first step in nodulisporic acid biosynthesis via conversion of farnesyl pyrophosphate and isopentyl pyrophosphate into geranylgeranyl pyrophosphate (GGPP). Condensation of indole-3-glycerol phosphate with GGPP by the prenyl transferase nodC then forms 3-geranylgeranylindole (3-GGI). Epoxidation by the FAD-dependent monooxygenase nodM leads to a single-epoxidized-GGI that is substrate of the terpene cyclase nodB for cyclization to yield emindole SB. The terminal methyl carbon, C28, of emindole SB is then oxidized by the cytochrome P450 monooxygenase nodW to produce nodulisporic acid F (NAF), the pentacyclic core of NAA. NAF is converted to nodulisporic acid E (NAE) via prenylation. This step is probably performed by one of the indole diterpene prenyltransferases nodD1 or nodD2. Several oxidation steps performed by the FAD-linked oxidoreductase nodO and one of the cytochrome P450 monooxygenase nodR, nodX or nodZ further convert NAE to nodulisporic acid D (NAD). NAD is substrate of cytochrome P450 monooxygenase nodJ to produce the precursor of nodulisporic acid C (NAC), converted to NAC by one of the indole diterpene prenyltransferases nodD1 or nodD2. The FAD-dependent monooxygenase nodY2 then oxidizes NAC to nodulisporic acid B (NAB). Finally NAB is converted to NAA by one of the cytochrome P450 monooxygenases nodR, nodX or nodZ. This Hypoxylon pulicicidum protein is Indole diterpene prenyltransferase nodD2.